The chain runs to 25 residues: Gamma-conotoxin PiVIIA (25 aa).

Disulfide bonds link C1/C15, C8/C19, and C14/C24. P4 is subject to 4-hydroxyproline. A 4-carboxyglutamate mark is found at E13 and E20.

It belongs to the conotoxin O2 superfamily. In terms of tissue distribution, expressed by the venom duct.

It is found in the secreted. Its function is as follows. Micromolar concentrations of PiVIIA increase the magnitude of the macroscopic calcium current in DRG neurons from rat. An increase, even modest of the calcium current, may have a significant impact in the excitability and electrical activity of neurons, and may set up PiVIIA as a member of the pharmacological family of the gamma-conotoxins. The sequence is that of Gamma-conotoxin PiVIIA from Conus princeps (Prince cone).